We begin with the raw amino-acid sequence, 303 residues long: Lipoyl synthase (303 aa).

7 residues coordinate [4Fe-4S] cluster: Cys40, Cys45, Cys51, Cys67, Cys71, Cys74, and Ser280. The Radical SAM core domain occupies 53-269 (AVRKTATFMI…KEIALSKGFS (217 aa)).

It belongs to the radical SAM superfamily. Lipoyl synthase family. The cofactor is [4Fe-4S] cluster.

It is found in the cytoplasm. The catalysed reaction is [[Fe-S] cluster scaffold protein carrying a second [4Fe-4S](2+) cluster] + N(6)-octanoyl-L-lysyl-[protein] + 2 oxidized [2Fe-2S]-[ferredoxin] + 2 S-adenosyl-L-methionine + 4 H(+) = [[Fe-S] cluster scaffold protein] + N(6)-[(R)-dihydrolipoyl]-L-lysyl-[protein] + 4 Fe(3+) + 2 hydrogen sulfide + 2 5'-deoxyadenosine + 2 L-methionine + 2 reduced [2Fe-2S]-[ferredoxin]. The protein operates within protein modification; protein lipoylation via endogenous pathway; protein N(6)-(lipoyl)lysine from octanoyl-[acyl-carrier-protein]. Functionally, catalyzes the radical-mediated insertion of two sulfur atoms into the C-6 and C-8 positions of the octanoyl moiety bound to the lipoyl domains of lipoate-dependent enzymes, thereby converting the octanoylated domains into lipoylated derivatives. The chain is Lipoyl synthase from Halalkalibacterium halodurans (strain ATCC BAA-125 / DSM 18197 / FERM 7344 / JCM 9153 / C-125) (Bacillus halodurans).